The chain runs to 1072 residues: Neurofilament heavy polypeptide (1072 aa).

At Ser-74 the chain carries Phosphoserine. The 316-residue stretch at 94–409 (EKEQLQALND…KLLEGEECRI (316 aa)) folds into the IF rod domain. Coiled coils occupy residues 98–132 (LQAL…LRQQ), 174–222 (IAHV…LQEE), and 293–380 (LDRL…QLRE). The tract at residues 278–643 (TVQSTLQSEE…AKSPAEAKSP (366 aa)) is 55 X 6 AA approximate tandem repeats of K-S-P-[VAGSE]-[KEVTSGA]-[EAVK]. 3 positions are modified to phosphoserine: Ser-343, Ser-414, and Ser-417. The tract at residues 454 to 1072 (EEQTEEIQVT…PEDKAAKGDK (619 aa)) is disordered. Residues 455–487 (EQTEEIQVTEEVTEEEDKEAQGEEEEEAEEGGE) are compositionally biased toward acidic residues. A compositionally biased stretch (low complexity) spans 488–499 (EAATTSPPAEEA). Ser-501 is subject to Phosphoserine. Over residues 501–584 (SPEKETKSPV…KSPAEAKSPA (84 aa)) the composition is skewed to basic and acidic residues. 36 tandem repeats follow at residues 507–512 (KSPVKE), 515–520 (KSPAEA), 521–526 (KSPAEA), 527–532 (KSPAEA), 533–538 (KSPAEV), 539–544 (KSPAEV), 545–550 (KSPAEA), 551–556 (KSPAEA), 557–562 (KSPAEV), 563–568 (KSPAEV), 569–574 (KSPAEA), 575–580 (KSPAEA), 581–586 (KSPAEV), 587–592 (KSPATV), 593–598 (KSPGEA), 599–604 (KSPAEA), 605–610 (KSPAEV), 611–616 (KSPVEA), 617–622 (KSPAEA), 623–628 (KSPASV), 629–634 (KSPGEA), 635–640 (KSPAEA), 641–646 (KSPAEV), 647–652 (KSPATV), 653–658 (KSPVEA), 659–664 (KSPAEV), 665–670 (KSPVTV), 671–676 (KSPAEA), 677–682 (KSPVEV), 683–688 (KSPASV), 689–694 (KSPSEA), 695–700 (KSPAGA), 701–706 (KSPAEA), 707–712 (KSPVVA), 713–718 (KSPAEA), and 719–724 (KSPAEA). Phosphoserine is present on residues Ser-516, Ser-522, Ser-528, Ser-534, Ser-540, Ser-546, Ser-552, Ser-558, Ser-564, Ser-570, Ser-576, Ser-582, Ser-588, Ser-594, Ser-600, Ser-606, Ser-612, Ser-618, Ser-624, Ser-627, Ser-630, Ser-636, Ser-642, Ser-648, Ser-654, Ser-660, Ser-666, Ser-672, Ser-678, Ser-684, Ser-687, Ser-690, Ser-696, Ser-702, Ser-708, Ser-714, and Ser-720. Over residues 600 to 620 (SPAEAKSPAEVKSPVEAKSPA) the composition is skewed to basic and acidic residues. A compositionally biased stretch (low complexity) spans 621–631 (EAKSPASVKSP). Residues 720-774 (SPAEAKPPAEAKSPAEAKSPAEAKSPAEAKSPAEAKSPVEVKSPEKAKSPVKEGA) are compositionally biased toward basic and acidic residues. One copy of the 37; approximate repeat lies at 725–730 (KPPAEA). Repeat copies occupy residues 731-736 (KSPAEA), 737-742 (KSPAEA), 743-748 (KSPAEA), 749-754 (KSPAEA), 755-760 (KSPVEV), 761-766 (KSPEKA), and 767-772 (KSPVKE). 6 positions are modified to phosphoserine: Ser-732, Ser-738, Ser-744, Ser-750, Ser-756, and Ser-762. One copy of the 45; approximate repeat lies at 775–780 (KSLAEA). A phosphoserine mark is found at Ser-776, Ser-782, and Ser-788. A run of 2 repeats spans residues 781-786 (KSPEKA) and 787-792 (KSPVKE). 2 stretches are compositionally biased toward basic and acidic residues: residues 781–953 (KSPE…KAAA) and 963–1072 (GVKE…KGDK). A 48; approximate repeat occupies 795–800 (KPPAEV). 4 consecutive repeat copies span residues 801-806 (KSPEKA), 807-812 (KSPMKE), 815-820 (KSPEKA), and 826-831 (KSPEAK). Phosphoserine is present on residues Ser-802, Ser-808, Ser-816, and Ser-827. Thr-832 carries the post-translational modification Phosphothreonine. Phosphoserine occurs at positions 846, 852, 860, 880, and 937. A run of 3 repeats spans residues 851 to 856 (KSPAKE), 859 to 864 (KSPEKE), and 879 to 884 (KSPVEE).

Belongs to the intermediate filament family. In terms of assembly, forms heterodimers with NEFL; which can further hetero-oligomerize (in vitro). Forms heterodimers with INA (in vitro). There are a number of repeats of the tripeptide K-S-P, NFH is phosphorylated on a number of the serines in this motif. It is thought that phosphorylation of NFH results in the formation of interfilament cross bridges that are important in the maintenance of axonal caliber. Post-translationally, phosphorylation seems to play a major role in the functioning of the larger neurofilament polypeptides (NF-M and NF-H), the levels of phosphorylation being altered developmentally and coincidentally with a change in the neurofilament function. In terms of processing, phosphorylated in the head and rod regions by the PKC kinase PKN1, leading to the inhibition of polymerization. As to expression, expressed in the dorsal root ganglion neurons (at protein level). Expressed in cutaneous and muscular sensory neurons.

Its subcellular location is the cytoplasm. It is found in the cytoskeleton. The protein resides in the cell projection. The protein localises to the axon. Neurofilaments usually contain three intermediate filament proteins: NEFL, NEFM, and NEFH which are involved in the maintenance of neuronal caliber. NEFH has an important function in mature axons that is not subserved by the two smaller NEF proteins. May additionally cooperate with the neuronal intermediate filament proteins PRPH and INA to form neuronal filamentous networks. The chain is Neurofilament heavy polypeptide (Nefh) from Rattus norvegicus (Rat).